We begin with the raw amino-acid sequence, 636 residues long: Threonine--tRNA ligase (636 aa).

Residues 1-59 form the TGS domain; it reads MPIITLPDGTKKIFEQVVSVEQVAKSMGLVKAALAGEVDGELVSTSFLIKTDANLTIIT. The catalytic stretch occupies residues 240-531; that stretch reads DHRKIGKTQD…LIEHYEGAYP (292 aa). Zn(2+)-binding residues include Cys331, His382, and His508.

It belongs to the class-II aminoacyl-tRNA synthetase family. Homodimer. Zn(2+) is required as a cofactor.

It is found in the cytoplasm. It carries out the reaction tRNA(Thr) + L-threonine + ATP = L-threonyl-tRNA(Thr) + AMP + diphosphate + H(+). Catalyzes the attachment of threonine to tRNA(Thr) in a two-step reaction: L-threonine is first activated by ATP to form Thr-AMP and then transferred to the acceptor end of tRNA(Thr). Also edits incorrectly charged L-seryl-tRNA(Thr). The polypeptide is Threonine--tRNA ligase (Vesicomyosocius okutanii subsp. Calyptogena okutanii (strain HA)).